We begin with the raw amino-acid sequence, 483 residues long: Sphingomyelin phosphodiesterase 5 (483 aa).

A disordered region spans residues 1–20; that stretch reads MSLPDISRRRSPVPQEDWPL. The chain crosses the membrane as a helical span at residues 80–100; the sequence is VLLPLVVVGLPLALVGLALWL. Mg(2+) is bound at residue E209. The active-site Proton acceptor is the H471.

Belongs to the neutral sphingomyelinase family. Mg(2+) is required as a cofactor. It depends on Mn(2+) as a cofactor. In terms of tissue distribution, highly expressed in testis, pancreas, epididymis, and brain.

The protein localises to the mitochondrion inner membrane. Its subcellular location is the endoplasmic reticulum membrane. It catalyses the reaction a sphingomyelin + H2O = phosphocholine + an N-acylsphing-4-enine + H(+). The enzyme catalyses N-(hexadecanoyl)-sphing-4-enine-1-phosphocholine + H2O = N-hexadecanoylsphing-4-enine + phosphocholine + H(+). It functions in the pathway lipid metabolism; sphingolipid metabolism. Activated by anionic phospholipids, specially cardiolipin and phosphatidylserine. Its function is as follows. Catalyzes the hydrolysis of membrane sphingomyelin to form phosphorylcholine and ceramide. The protein is Sphingomyelin phosphodiesterase 5 of Mus musculus (Mouse).